A 147-amino-acid chain; its full sequence is Anti-sigma F factor (147 aa).

The protein belongs to the anti-sigma-factor family.

It carries out the reaction L-seryl-[protein] + ATP = O-phospho-L-seryl-[protein] + ADP + H(+). The enzyme catalyses L-threonyl-[protein] + ATP = O-phospho-L-threonyl-[protein] + ADP + H(+). Its function is as follows. Binds to sigma F and blocks its ability to form an RNA polymerase holoenzyme (E-sigma F). Phosphorylates SpoIIAA on a serine residue. This phosphorylation may enable SpoIIAA to act as an anti-anti-sigma factor that counteracts SpoIIAB and thus releases sigma F from inhibition. This is Anti-sigma F factor from Priestia megaterium (Bacillus megaterium).